Here is a 227-residue protein sequence, read N- to C-terminus: Glutathione S-transferase U18 (227 aa).

The GST N-terminal domain maps to 4-83 (EDVKLIGSWA…YIDEAWNSSG (80 aa)). Glutathione contacts are provided by residues 14 to 15 (SV), 40 to 41 (SK), 54 to 55 (KM), and 67 to 68 (ES). A GST C-terminal domain is found at 90–221 (HPYDRAIARF…TKLAEFARKL (132 aa)).

This sequence belongs to the GST superfamily. Tau family.

The protein resides in the cytoplasm. Its subcellular location is the cytosol. It catalyses the reaction RX + glutathione = an S-substituted glutathione + a halide anion + H(+). May be involved in the conjugation of reduced glutathione to a wide number of exogenous and endogenous hydrophobic electrophiles and have a detoxification role against certain herbicides. The protein is Glutathione S-transferase U18 (GSTU18) of Arabidopsis thaliana (Mouse-ear cress).